The primary structure comprises 100 residues: Small ribosomal subunit protein uS14 (100 aa).

Belongs to the universal ribosomal protein uS14 family. As to quaternary structure, part of the 30S ribosomal subunit. Contacts proteins S3 and S10.

In terms of biological role, binds 16S rRNA, required for the assembly of 30S particles and may also be responsible for determining the conformation of the 16S rRNA at the A site. The chain is Small ribosomal subunit protein uS14 from Acaryochloris marina (strain MBIC 11017).